A 252-amino-acid polypeptide reads, in one-letter code: Ribosomal RNA small subunit methyltransferase J (252 aa).

S-adenosyl-L-methionine is bound by residues 101-102 (RD), 117-118 (ER), 153-154 (SS), and aspartate 171.

Belongs to the methyltransferase superfamily. RsmJ family.

The protein localises to the cytoplasm. The enzyme catalyses guanosine(1516) in 16S rRNA + S-adenosyl-L-methionine = N(2)-methylguanosine(1516) in 16S rRNA + S-adenosyl-L-homocysteine + H(+). Its function is as follows. Specifically methylates the guanosine in position 1516 of 16S rRNA. This is Ribosomal RNA small subunit methyltransferase J from Salmonella dublin (strain CT_02021853).